Consider the following 148-residue polypeptide: UPF0758 protein YeeS (148 aa).

One can recognise an MPN domain in the interval 26–148; sequence AFTSTRAARE…VFSFAEHGLL (123 aa). The Zn(2+) site is built by His-97, His-99, and Asp-110. Positions 97–110 match the JAMM motif motif; the sequence is HNHPSGEVTPSKAD.

The protein belongs to the UPF0758 family.

The chain is UPF0758 protein YeeS (yeeS) from Escherichia coli (strain K12).